Reading from the N-terminus, the 663-residue chain is Inner nuclear membrane protein HEH2 (663 aa).

2 disordered regions span residues 46–188 (QRLQ…ELPN) and 267–289 (ISETFDNQDEEDTSRLSSKKNIR). The span at 47 to 62 (RLQSSPEASKVRTSIQ) shows a compositional bias: polar residues. Basic and acidic residues predominate over residues 91–123 (KTVKDENVETNKRKREQISTDNEAKMQIQEEKS). Ser-123 is modified (phosphoserine). A compositionally biased stretch (basic residues) spans 124–134 (PKKKRKKRSSK). Positions 124–137 (PKKKRKKRSSKANK) match the Nuclear localization signal motif. The span at 164 to 183 (EELHKKDSSDDKPRVKELPK) shows a compositional bias: basic and acidic residues. A helical transmembrane segment spans residues 317–337 (LFIWLWNGAIFLSIICPILFG).

As to quaternary structure, interacts with SRP1.

It localises to the nucleus inner membrane. The chain is Inner nuclear membrane protein HEH2 (HEH2) from Saccharomyces cerevisiae (strain ATCC 204508 / S288c) (Baker's yeast).